We begin with the raw amino-acid sequence, 213 residues long: Holliday junction branch migration complex subunit RuvA (213 aa).

Residues 1–64 (MIARLVGFLV…EDSITLFGFA (64 aa)) form a domain I region. The tract at residues 65–143 (SYLERDWFRL…AIALFSSAKG (79 aa)) is domain II. The flexible linker stretch occupies residues 144-159 (DHLAVEDISQPAASAH). The segment at 160–213 (HAGNFMADAVSALLNLGFKPAEAQRVVQLASEELGDQATLDSLVRLALRLSSKH) is domain III.

It belongs to the RuvA family. As to quaternary structure, homotetramer. Forms an RuvA(8)-RuvB(12)-Holliday junction (HJ) complex. HJ DNA is sandwiched between 2 RuvA tetramers; dsDNA enters through RuvA and exits via RuvB. An RuvB hexamer assembles on each DNA strand where it exits the tetramer. Each RuvB hexamer is contacted by two RuvA subunits (via domain III) on 2 adjacent RuvB subunits; this complex drives branch migration. In the full resolvosome a probable DNA-RuvA(4)-RuvB(12)-RuvC(2) complex forms which resolves the HJ.

It localises to the cytoplasm. Functionally, the RuvA-RuvB-RuvC complex processes Holliday junction (HJ) DNA during genetic recombination and DNA repair, while the RuvA-RuvB complex plays an important role in the rescue of blocked DNA replication forks via replication fork reversal (RFR). RuvA specifically binds to HJ cruciform DNA, conferring on it an open structure. The RuvB hexamer acts as an ATP-dependent pump, pulling dsDNA into and through the RuvAB complex. HJ branch migration allows RuvC to scan DNA until it finds its consensus sequence, where it cleaves and resolves the cruciform DNA. In Zymomonas mobilis subsp. mobilis (strain ATCC 31821 / ZM4 / CP4), this protein is Holliday junction branch migration complex subunit RuvA.